The following is a 549-amino-acid chain: MNKRGKYTTLNLEEKMKVLSRIEAGRSLKSVMDEFGISKSTFYDIKKNKKLILDFVLKQDMPLVGAEKRKRTTGAKYGDVDDAVYMWYQQKRSAGVPVRGVELQAAAERFARCFGRTDFKASTGWLFRFRNRHAIGNRKGCGEQVLSSVSENVEPFRQKLSMIIKEEKLCLAQLYSGDETDLFWKSMPENSQASRKDICLPGKKINKERLSAFLCANADGTHKLKSIIIGKSKLPKSVKEDTSTLPVIYKPSKDVWFTRELFSEWFFQNFVPEVRHFQLNVLRFHDEDVRALLLLDSCPAHPSSESLTSEDGRIKCMFFPHNTSTLIQPMNQGVILSCKRLYRWKQLEESLVIFEESDDEQEKGDKGVSKIKIYNIKSAIFNWAKSWEEVKQITIANAWENLLYKKEPEYDFQGLEHGDYREILEKCGELETKLDDDRVWLNGDEEKGCLLKTKGGITKEVVQKGGEAEKQTAEFKLSAVRESLDYLLDFVDATPEFQRFHFTLKEMQQEIVKKQFQSKIHSRIGSFLKPRPHNIKDSFSGPSTSGSNH.

The 52-residue stretch at 1–52 (MNKRGKYTTLNLEEKMKVLSRIEAGRSLKSVMDEFGISKSTFYDIKKNKKLI) folds into the HTH psq-type domain. 2 DNA-binding regions (H-T-H motif) span residues 28–48 (LKSV…IKKN) and 101–132 (VELQ…FRNR). The HTH CENPB-type domain occupies 68–139 (KRKRTTGAKY…RNRHAIGNRK (72 aa)). The 231-residue stretch at 169-399 (LCLAQLYSGD…VKQITIANAW (231 aa)) folds into the DDE-1 domain. Residues 527–549 (FLKPRPHNIKDSFSGPSTSGSNH) are disordered. A compositionally biased stretch (polar residues) spans 540–549 (SGPSTSGSNH).

The protein belongs to the tigger transposable element derived protein family. As to expression, expressed in all tissues tested. Higher expression in testis and ovary.

The protein localises to the nucleus. The protein is Tigger transposable element-derived protein 7 (TIGD7) of Homo sapiens (Human).